We begin with the raw amino-acid sequence, 620 residues long: 1-deoxy-D-xylulose-5-phosphate synthase (620 aa).

Thiamine diphosphate contacts are provided by residues His-80 and 121 to 123 (GHS). Asp-152 contacts Mg(2+). Thiamine diphosphate is bound by residues 153 to 154 (GA), Asn-181, Tyr-288, and Glu-370. A Mg(2+)-binding site is contributed by Asn-181.

Belongs to the transketolase family. DXPS subfamily. As to quaternary structure, homodimer. It depends on Mg(2+) as a cofactor. Thiamine diphosphate serves as cofactor.

The catalysed reaction is D-glyceraldehyde 3-phosphate + pyruvate + H(+) = 1-deoxy-D-xylulose 5-phosphate + CO2. It participates in metabolic intermediate biosynthesis; 1-deoxy-D-xylulose 5-phosphate biosynthesis; 1-deoxy-D-xylulose 5-phosphate from D-glyceraldehyde 3-phosphate and pyruvate: step 1/1. Catalyzes the acyloin condensation reaction between C atoms 2 and 3 of pyruvate and glyceraldehyde 3-phosphate to yield 1-deoxy-D-xylulose-5-phosphate (DXP). In Escherichia coli O127:H6 (strain E2348/69 / EPEC), this protein is 1-deoxy-D-xylulose-5-phosphate synthase.